We begin with the raw amino-acid sequence, 144 residues long: Phospholipase A2, membrane associated (144 aa).

Residues 1-20 (MKTLLLLAVIMIFGLLQAHG) form the signal peptide. Intrachain disulfides connect cysteine 46/cysteine 137, cysteine 48/cysteine 64, cysteine 63/cysteine 117, cysteine 69/cysteine 144, cysteine 70/cysteine 110, cysteine 79/cysteine 103, and cysteine 97/cysteine 108. Ca(2+)-binding residues include histidine 47, glycine 49, and glycine 51. Histidine 67 is a catalytic residue. Aspartate 68 serves as a coordination point for Ca(2+). Aspartate 111 is a catalytic residue.

The protein belongs to the phospholipase A2 family. It depends on Ca(2+) as a cofactor. Expressed in various tissues including heart, kidney, liver, lung, pancreas, placenta, skeletal muscle, prostate, ovary, colon and small intestine. Not detected in lymphoid organs and brain. Expressed in platelets (at protein level).

It localises to the secreted. Its subcellular location is the cell membrane. It is found in the mitochondrion outer membrane. The catalysed reaction is a 1,2-diacyl-sn-glycero-3-phosphoethanolamine + H2O = a 1-acyl-sn-glycero-3-phosphoethanolamine + a fatty acid + H(+). It carries out the reaction 1-hexadecanoyl-2-(9Z-octadecenoyl)-sn-glycero-3-phosphoethanolamine + H2O = 1-hexadecanoyl-sn-glycero-3-phosphoethanolamine + (9Z)-octadecenoate + H(+). The enzyme catalyses 1-hexadecanoyl-2-(9Z,12Z-octadecadienoyl)-sn-glycero-3-phosphoethanolamine + H2O = 1-hexadecanoyl-sn-glycero-3-phosphoethanolamine + (9Z,12Z)-octadecadienoate + H(+). It catalyses the reaction 1-hexadecanoyl-2-(5Z,8Z,11Z,14Z-eicosatetraenoyl)-sn-glycero-3-phosphoethanolamine + H2O = 1-hexadecanoyl-sn-glycero-3-phosphoethanolamine + (5Z,8Z,11Z,14Z)-eicosatetraenoate + H(+). The catalysed reaction is N-hexadecanoyl-1,2-di-(9Z-octadecenoyl)-sn-glycero-3-phosphoethanolamine + H2O = N-hexadecanoyl-1-(9Z-octadecenoyl)-sn-glycero-3-phosphoethanolamine + (9Z)-octadecenoate + H(+). It carries out the reaction 1,2-dihexadecanoyl-sn-glycero-3-phospho-(1'-sn-glycerol) + H2O = 1-hexadecanoyl-sn-glycero-3-phospho-(1'-sn-glycerol) + hexadecanoate + H(+). The enzyme catalyses 1-hexadecanoyl-2-(9Z-octadecenoyl)-sn-glycero-3-phosphoglycerol + H2O = 1-hexadecanoyl-sn-glycero-3-phosphoglycerol + (9Z)-octadecenoate + H(+). It catalyses the reaction 1-hexadecanoyl-2-(9Z-octadecenoyl)-sn-glycero-3-phospho-(1'-sn-glycerol) + H2O = 1-hexadecanoyl-sn-glycero-3-phospho-(1'-sn-glycerol) + (9Z)-octadecenoate + H(+). The catalysed reaction is a 1,2-diacyl-sn-glycero-3-phosphocholine + H2O = a 1-acyl-sn-glycero-3-phosphocholine + a fatty acid + H(+). It carries out the reaction 1,2-dihexadecanoyl-sn-glycero-3-phosphocholine + H2O = 1-hexadecanoyl-sn-glycero-3-phosphocholine + hexadecanoate + H(+). The enzyme catalyses 1-hexadecanoyl-2-(9Z-octadecenoyl)-sn-glycero-3-phosphocholine + H2O = 1-hexadecanoyl-sn-glycero-3-phosphocholine + (9Z)-octadecenoate + H(+). It catalyses the reaction 1-hexadecanoyl-2-(9Z,12Z-octadecadienoyl)-sn-glycero-3-phosphocholine + H2O = (9Z,12Z)-octadecadienoate + 1-hexadecanoyl-sn-glycero-3-phosphocholine + H(+). The catalysed reaction is 1-hexadecanoyl-2-(4Z,7Z,10Z,13Z,16Z,19Z-docosahexaenoyl)-sn-glycero-3-phosphocholine + H2O = (4Z,7Z,10Z,13Z,16Z,19Z)-docosahexaenoate + 1-hexadecanoyl-sn-glycero-3-phosphocholine + H(+). Functionally, secretory calcium-dependent phospholipase A2 that primarily targets extracellular phospholipids with implications in host antimicrobial defense, inflammatory response and tissue regeneration. Hydrolyzes the ester bond of the fatty acyl group attached at sn-2 position of phospholipids (phospholipase A2 activity) with preference for phosphatidylethanolamines and phosphatidylglycerols over phosphatidylcholines. Contributes to lipid remodeling of cellular membranes and generation of lipid mediators involved in pathogen clearance. Displays bactericidal activity against Gram-positive bacteria by directly hydrolyzing phospholipids of the bacterial membrane. Upon sterile inflammation, targets membrane phospholipids of extracellular mitochondria released from activated platelets, generating free unsaturated fatty acids such as arachidonate that is used by neighboring leukocytes to synthesize inflammatory eicosanoids such as leukotrienes. Simultaneously, by compromising mitochondrial membrane integrity, promotes the release in circulation of potent damage-associated molecular pattern molecules that activate the innate immune response. Plays a stem cell regulator role in the intestinal crypt. Within intracellular compartment mediates Paneth cell differentiation and its stem cell supporting functions by inhibiting Wnt signaling pathway in intestinal stem cell (ICS). Secreted in the intestinal lumen upon inflammation, acts in an autocrine way and promotes prostaglandin E2 synthesis that stimulates Wnt signaling pathway in ICS cells and tissue regeneration. May play a role in the biosynthesis of N-acyl ethanolamines that regulate energy metabolism and inflammation. Hydrolyzes N-acyl phosphatidylethanolamines to N-acyl lysophosphatidylethanolamines, which are further cleaved by a lysophospholipase D to release N-acyl ethanolamines. Independent of its catalytic activity, acts as a ligand for integrins. Binds to and activates integrins ITGAV:ITGB3, ITGA4:ITGB1 and ITGA5:ITGB1. Binds to a site (site 2) which is distinct from the classical ligand-binding site (site 1) and induces integrin conformational changes and enhanced ligand binding to site 1. Induces cell proliferation in an integrin-dependent manner. This Homo sapiens (Human) protein is Phospholipase A2, membrane associated (PLA2G2A).